A 208-amino-acid polypeptide reads, in one-letter code: MKLVEVKHPLVKHKLGVMREAEIDTKKFRELATEIGSLLTYEATSDLETEKVTINSWNGPVEIDRIKGKKVTVVPILRAGLGMMDGVLEHVPSARISVVGIYRNEETLKPVPYFQKLASDLEERLAIVVDPMLATGGSMIATLDLLKAKGCKHIKVLVLVAAPEGIKALEAAHPDIELYCASIDSHLNEQGYIIPGLGDAGDKIFGTK.

Residues arginine 78, arginine 103, and aspartate 130–serine 138 each bind 5-phospho-alpha-D-ribose 1-diphosphate. Residues isoleucine 193 and glycine 198 to alanine 200 contribute to the uracil site. Aspartate 199 provides a ligand contact to 5-phospho-alpha-D-ribose 1-diphosphate.

It belongs to the UPRTase family. The cofactor is Mg(2+).

The catalysed reaction is UMP + diphosphate = 5-phospho-alpha-D-ribose 1-diphosphate + uracil. Its pathway is pyrimidine metabolism; UMP biosynthesis via salvage pathway; UMP from uracil: step 1/1. With respect to regulation, allosterically activated by GTP. Functionally, catalyzes the conversion of uracil and 5-phospho-alpha-D-ribose 1-diphosphate (PRPP) to UMP and diphosphate. This is Uracil phosphoribosyltransferase from Haemophilus influenzae (strain 86-028NP).